A 621-amino-acid polypeptide reads, in one-letter code: 1-deoxy-D-xylulose-5-phosphate synthase (621 aa).

Residues H76 and 117–119 (AHS) each bind thiamine diphosphate. Position 148 (D148) interacts with Mg(2+). Residues 149–150 (GA), N178, Y285, and E367 contribute to the thiamine diphosphate site. Position 178 (N178) interacts with Mg(2+).

It belongs to the transketolase family. DXPS subfamily. In terms of assembly, homodimer. Requires Mg(2+) as cofactor. It depends on thiamine diphosphate as a cofactor.

It carries out the reaction D-glyceraldehyde 3-phosphate + pyruvate + H(+) = 1-deoxy-D-xylulose 5-phosphate + CO2. It participates in metabolic intermediate biosynthesis; 1-deoxy-D-xylulose 5-phosphate biosynthesis; 1-deoxy-D-xylulose 5-phosphate from D-glyceraldehyde 3-phosphate and pyruvate: step 1/1. Its function is as follows. Catalyzes the acyloin condensation reaction between C atoms 2 and 3 of pyruvate and glyceraldehyde 3-phosphate to yield 1-deoxy-D-xylulose-5-phosphate (DXP). This Aromatoleum aromaticum (strain DSM 19018 / LMG 30748 / EbN1) (Azoarcus sp. (strain EbN1)) protein is 1-deoxy-D-xylulose-5-phosphate synthase.